An 840-amino-acid chain; its full sequence is N-acetyltransferase ESCO1 (840 aa).

Over residues 1 to 25 (MMSIQEKSKENSSKVTKKSDDKNSE) the composition is skewed to basic and acidic residues. A disordered region spans residues 1-188 (MMSIQEKSKE…VLEVKSDSKE (188 aa)). Composition is skewed to polar residues over residues 46-58 (KSQA…SKIN), 65-74 (RMSTRSSKAA), and 81-96 (KSIN…YSQE). The segment covering 131–140 (VSRRSLRSRE) has biased composition (basic and acidic residues). Positions 141 to 153 (IQGQVQAVKQSLP) are enriched in polar residues. The segment covering 161-170 (SSTQSKSNKT) has biased composition (low complexity). The segment covering 178–188 (KVLEVKSDSKE) has biased composition (basic and acidic residues). Position 200 is a phosphoserine (Ser200). Disordered stretches follow at residues 221-300 (TQGS…KSKR) and 318-338 (NVEV…KPTE). The span at 267–278 (HTQVNTNTTLPK) shows a compositional bias: polar residues. Positions 319 to 338 (VEVKKESSQMESVKEEKPTE) are enriched in basic and acidic residues. A Glycyl lysine isopeptide (Lys-Gly) (interchain with G-Cter in SUMO2) cross-link involves residue Lys332. Residue Ser412 is modified to Phosphoserine. Disordered stretches follow at residues 486–505 (ANEI…HSFD) and 542–582 (TGEN…KCNS). The segment covering 551 to 565 (APQQHSILSNQTSKS) has biased composition (polar residues). A CCHH-type zinc finger spans residues 617 to 641 (VSCNVCGMLYTASNPEDETQHLLFH). Acetyl-CoA contacts are provided by residues 772 to 774 (IWV), 780 to 785 (RKKIAS), and 812 to 814 (TPD).

The protein belongs to the acetyltransferase family. ECO subfamily. In terms of assembly, the subunit structure is controversial. Monomer. Homodimer. Phosphorylated during mitosis, when associated with chromosomes. Widely expressed. Expressed in heart, brain, liver, placenta, lung, kidney and pancreas. Highly expressed in muscle.

It localises to the nucleus. It is found in the chromosome. It carries out the reaction L-lysyl-[protein] + acetyl-CoA = N(6)-acetyl-L-lysyl-[protein] + CoA + H(+). In terms of biological role, acetyltransferase required for the establishment of sister chromatid cohesion. Couples the processes of cohesion and DNA replication to ensure that only sister chromatids become paired together. In contrast to the structural cohesins, the deposition and establishment factors are required only during S phase. Acts by mediating the acetylation of cohesin component SMC3. The chain is N-acetyltransferase ESCO1 (ESCO1) from Homo sapiens (Human).